Here is a 193-residue protein sequence, read N- to C-terminus: Ion-translocating oxidoreductase complex subunit A (193 aa).

The next 6 membrane-spanning stretches (helical) occupy residues 5 to 25 (LLLLVSTVLINNFVLVKFLGL), 39 to 59 (VGMGLATTFVMTLASASSYLM), 63 to 83 (ILIPLNIAYLRTLAFILVIAV), 102 to 122 (LLGIFLPLITTNCAVLGVALL), 134 to 154 (IIYGFGAAAGFSLVLILFAAM), and 171 to 191 (SIAMVTAGLMSLAFMGFTGLI).

This sequence belongs to the NqrDE/RnfAE family. In terms of assembly, the complex is composed of six subunits: RnfA, RnfB, RnfC, RnfD, RnfE and RnfG.

Its subcellular location is the cell inner membrane. Functionally, part of a membrane-bound complex that couples electron transfer with translocation of ions across the membrane. This is Ion-translocating oxidoreductase complex subunit A from Aeromonas salmonicida (strain A449).